Consider the following 248-residue polypeptide: Pyridoxine 5'-phosphate synthase (248 aa).

Position 10 (Asn-10) interacts with 3-amino-2-oxopropyl phosphate. 12 to 13 (DH) contacts 1-deoxy-D-xylulose 5-phosphate. A 3-amino-2-oxopropyl phosphate-binding site is contributed by Arg-21. His-46 (proton acceptor) is an active-site residue. The 1-deoxy-D-xylulose 5-phosphate site is built by Arg-48 and His-53. Catalysis depends on Glu-73, which acts as the Proton acceptor. Residue Thr-103 coordinates 1-deoxy-D-xylulose 5-phosphate. His-194 acts as the Proton donor in catalysis. Residues Gly-195 and 216–217 (GH) contribute to the 3-amino-2-oxopropyl phosphate site.

It belongs to the PNP synthase family. In terms of assembly, homooctamer; tetramer of dimers.

It is found in the cytoplasm. It carries out the reaction 3-amino-2-oxopropyl phosphate + 1-deoxy-D-xylulose 5-phosphate = pyridoxine 5'-phosphate + phosphate + 2 H2O + H(+). It participates in cofactor biosynthesis; pyridoxine 5'-phosphate biosynthesis; pyridoxine 5'-phosphate from D-erythrose 4-phosphate: step 5/5. Functionally, catalyzes the complicated ring closure reaction between the two acyclic compounds 1-deoxy-D-xylulose-5-phosphate (DXP) and 3-amino-2-oxopropyl phosphate (1-amino-acetone-3-phosphate or AAP) to form pyridoxine 5'-phosphate (PNP) and inorganic phosphate. The chain is Pyridoxine 5'-phosphate synthase from Legionella pneumophila (strain Corby).